The primary structure comprises 65 residues: Large ribosomal subunit protein bL33 (65 aa).

The tract at residues 19–40 (TVPSSKKRSAGVSRYTTEKNRR) is disordered.

This sequence belongs to the bacterial ribosomal protein bL33 family.

This is Large ribosomal subunit protein bL33 from Prochlorococcus marinus (strain NATL2A).